The following is a 187-amino-acid chain: UPF0301 protein YqgE (187 aa).

It belongs to the UPF0301 (AlgH) family.

The polypeptide is UPF0301 protein YqgE (Salmonella paratyphi B (strain ATCC BAA-1250 / SPB7)).